The sequence spans 247 residues: Cell division protein ZapD (247 aa).

It belongs to the ZapD family. As to quaternary structure, interacts with FtsZ.

Its subcellular location is the cytoplasm. Its function is as follows. Cell division factor that enhances FtsZ-ring assembly. Directly interacts with FtsZ and promotes bundling of FtsZ protofilaments, with a reduction in FtsZ GTPase activity. In Shigella boydii serotype 4 (strain Sb227), this protein is Cell division protein ZapD.